The sequence spans 507 residues: Glycerol kinase (507 aa).

Residue Thr15 coordinates ADP. Residues Thr15, Thr16, and Ser17 each coordinate ATP. Thr15 contacts sn-glycerol 3-phosphate. Arg19 provides a ligand contact to ADP. Arg85, Glu86, Tyr137, and Asp250 together coordinate sn-glycerol 3-phosphate. 5 residues coordinate glycerol: Arg85, Glu86, Tyr137, Asp250, and Gln251. Residues Thr272 and Gly316 each contribute to the ADP site. 4 residues coordinate ATP: Thr272, Gly316, Gln320, and Gly417. Position 417 (Gly417) interacts with ADP.

This sequence belongs to the FGGY kinase family.

It catalyses the reaction glycerol + ATP = sn-glycerol 3-phosphate + ADP + H(+). The protein operates within polyol metabolism; glycerol degradation via glycerol kinase pathway; sn-glycerol 3-phosphate from glycerol: step 1/1. Inhibited by fructose 1,6-bisphosphate (FBP). In terms of biological role, key enzyme in the regulation of glycerol uptake and metabolism. Catalyzes the phosphorylation of glycerol to yield sn-glycerol 3-phosphate. The protein is Glycerol kinase of Mycoplasmopsis pulmonis (strain UAB CTIP) (Mycoplasma pulmonis).